Consider the following 842-residue polypeptide: MLFWAAHLLLSLQLAVAYCWAFSCQRTESSPGFSLPGDFLLAGLFSLHADCLQVRHRPLVTSCDRSDSFNGHGYHLFQAMRFTVEEINNSTALLPNITLGYELYDVCSESSNVYATLRVLAQQGTGHLEMQRDLRNHSSKVVALIGPDNTDHAVTTAALLSPFLMPLVSYEASSVILSGKRKFPSFLRTIPSDKYQVEVIVRLLQSFGWVWISLVGSYGDYGQLGVQALEELATPRGICVAFKNVVPLSAQAGDPRMQRMMLRLARARTTVVVVFSNRHLDGVFFRSVVLANLTGKVWIASEDWAISTNIPNVSGIQGIGTVLGVAIQQRQVPGLKEFEESYVQAVMGAPRTCPEGSWCGTNQLCRECHAFTTWNMPELGAFSMSAAYNVYEAVYAVAHGLHQLLGCTSGTCARGPVHPWQLLQQIYKVNFLLHKKTVAFDDKGDPLGYYDIIAWDWNGPEWTFEVIGSASLSPVHLDINKTKIQWHGKNNQVPVSVCTRDCLEGHHRLVMGSHHCCFECMPCEAGTFLNTSELHTCQPCGTEEWAPEGSSACFSRTVEFLGWHEPISLVLLAANTLLLLLLIGTAGLFAWRLHTPVVRSAGGRLCFLMLGSLVAGSCSLYSFFGKPTVPACLLRQPLFSLGFAIFLSCLTIRSFQLVIIFKFSTKVPTFYHTWAQNHGAGIFVIVSSTVHLFLCLTWLAMWTPRPTREYQRFPHLVILECTEVNSVGFLVAFAHNILLSISTFVCSYLGKELPENYNEAKCVTFSLLLHFVSWIAFFTMSSIYQGSYLPAVNVLAGLATLSGGFSGYFLPKCYVILCRPELNNTEHFQASIQDYTRRCGTT.

Residues 1–19 (MLFWAAHLLLSLQLAVAYC) form the signal peptide. The Extracellular portion of the chain corresponds to 20 to 568 (WAFSCQRTES…EFLGWHEPIS (549 aa)). Residues Asn-88, Asn-89, Asn-96, Asn-136, Asn-292, Asn-480, and Asn-530 are each glycosylated (N-linked (GlcNAc...) asparagine). A helical transmembrane segment spans residues 569-589 (LVLLAANTLLLLLLIGTAGLF). Residues 590–604 (AWRLHTPVVRSAGGR) are Cytoplasmic-facing. Residues 605-625 (LCFLMLGSLVAGSCSLYSFFG) form a helical membrane-spanning segment. The Extracellular segment spans residues 626 to 640 (KPTVPACLLRQPLFS). A helical membrane pass occupies residues 641-661 (LGFAIFLSCLTIRSFQLVIIF). Residues 662–681 (KFSTKVPTFYHTWAQNHGAG) lie on the Cytoplasmic side of the membrane. Residues 682–702 (IFVIVSSTVHLFLCLTWLAMW) traverse the membrane as a helical segment. Topologically, residues 703-725 (TPRPTREYQRFPHLVILECTEVN) are extracellular. The helical transmembrane segment at 726-746 (SVGFLVAFAHNILLSISTFVC) threads the bilayer. Residues 747 to 762 (SYLGKELPENYNEAKC) lie on the Cytoplasmic side of the membrane. The helical transmembrane segment at 763 to 783 (VTFSLLLHFVSWIAFFTMSSI) threads the bilayer. Over 784–789 (YQGSYL) the chain is Extracellular. A helical membrane pass occupies residues 790 to 810 (PAVNVLAGLATLSGGFSGYFL). Residues 811 to 842 (PKCYVILCRPELNNTEHFQASIQDYTRRCGTT) lie on the Cytoplasmic side of the membrane.

It belongs to the G-protein coupled receptor 3 family. TAS1R subfamily. Forms heterodimers with TAS1R3. As to expression, expressed strongly only in fungiform papillae.

The protein resides in the cell membrane. In terms of biological role, putative taste receptor. TAS1R1/TAS1R3 responds to the umami taste stimulus (the taste of monosodium glutamate) and also to most of the 20 standard L-amino acids, but not to their D-enantiomers or other compounds. Sequence differences within and between species can significantly influence the selectivity and specificity of taste responses. This Mus musculus (Mouse) protein is Taste receptor type 1 member 1 (Tas1r1).